The sequence spans 296 residues: Polyamine aminopropyltransferase (296 aa).

A PABS domain is found at 16-251 (HLWYFEYYTG…GMWSYTFASK (236 aa)). Residue Gln46 participates in S-methyl-5'-thioadenosine binding. The spermidine site is built by His77 and Asp101. Residues Glu121 and 152–153 (NG) each bind S-methyl-5'-thioadenosine. The active-site Proton acceptor is the Asp170. 170-173 (DSTD) contacts spermidine.

This sequence belongs to the spermidine/spermine synthase family. In terms of assembly, homodimer or homotetramer.

It is found in the cytoplasm. The catalysed reaction is S-adenosyl 3-(methylsulfanyl)propylamine + putrescine = S-methyl-5'-thioadenosine + spermidine + H(+). It participates in amine and polyamine biosynthesis; spermidine biosynthesis; spermidine from putrescine: step 1/1. Its function is as follows. Catalyzes the irreversible transfer of a propylamine group from the amino donor S-adenosylmethioninamine (decarboxy-AdoMet) to putrescine (1,4-diaminobutane) to yield spermidine. The protein is Polyamine aminopropyltransferase of Thermotoga neapolitana (strain ATCC 49049 / DSM 4359 / NBRC 107923 / NS-E).